Consider the following 338-residue polypeptide: Protein mono-ADP-ribosyltransferase PARP11 (338 aa).

E13 carries the ADP-ribosyl glutamic acid modification. Residue K18 is modified to N6-(ADP-ribosyl)lysine. Residues 22–106 enclose the WWE domain; that stretch reads NEVDDMDTSD…TTGKQRLIKR (85 aa). 2 positions are modified to ADP-ribosylcysteine: C56 and C72. D87 carries the post-translational modification ADP-ribosyl aspartic acid. Positions 123-338 constitute a PARP catalytic domain; it reads IPMPPHWENV…IYPEYLIDFH (216 aa).

Belongs to the ARTD/PARP family. Interacts with PARP12; this interaction plays a role in zika virus suppression. In terms of processing, auto-mono-ADP-ribosylated.

Its subcellular location is the nucleus. The protein resides in the nuclear pore complex. It catalyses the reaction L-aspartyl-[protein] + NAD(+) = 4-O-(ADP-D-ribosyl)-L-aspartyl-[protein] + nicotinamide. The enzyme catalyses L-cysteinyl-[protein] + NAD(+) = S-(ADP-D-ribosyl)-L-cysteinyl-[protein] + nicotinamide + H(+). It carries out the reaction L-glutamyl-[protein] + NAD(+) = 5-O-(ADP-D-ribosyl)-L-glutamyl-[protein] + nicotinamide. The catalysed reaction is L-lysyl-[protein] + NAD(+) = N(6)-(ADP-D-ribosyl)-L-lysyl-[protein] + nicotinamide + H(+). In terms of biological role, mono-ADP-ribosyltransferase that mediates mono-ADP-ribosylation of target proteins. Plays a role in nuclear envelope stability and nuclear remodeling during spermiogenesis. Inhibits the type I interferon activated signaling pathway. Mechanistically, mono-ADP-ribosylates beta-TrCP/BTRC to promote IFNAR1 ubiquitination and protect BTRC from ubiquitin-proteasome degradation. Additionally, acts as an antiviral factor by cooperating with PARP12 to suppress Zika virus replication, independent of IFNAR1 regulation or intrinsic PARP enzymatic activity. Instead, facilitates the degradation of viral NS1 and NS3 proteins, potentially disrupting viral replication. The polypeptide is Protein mono-ADP-ribosyltransferase PARP11 (Homo sapiens (Human)).